A 95-amino-acid polypeptide reads, in one-letter code: MSLDPATVRRIARLARIGIDESDLHALQGELNGILGWIEQLNEVDIDGVEPMVGTGHAALRMREDVVTDGAARDAVLSNAPDAAGPFYTVPKVVE.

It belongs to the GatC family. Heterotrimer of A, B and C subunits.

The enzyme catalyses L-glutamyl-tRNA(Gln) + L-glutamine + ATP + H2O = L-glutaminyl-tRNA(Gln) + L-glutamate + ADP + phosphate + H(+). The catalysed reaction is L-aspartyl-tRNA(Asn) + L-glutamine + ATP + H2O = L-asparaginyl-tRNA(Asn) + L-glutamate + ADP + phosphate + 2 H(+). Allows the formation of correctly charged Asn-tRNA(Asn) or Gln-tRNA(Gln) through the transamidation of misacylated Asp-tRNA(Asn) or Glu-tRNA(Gln) in organisms which lack either or both of asparaginyl-tRNA or glutaminyl-tRNA synthetases. The reaction takes place in the presence of glutamine and ATP through an activated phospho-Asp-tRNA(Asn) or phospho-Glu-tRNA(Gln). This is Aspartyl/glutamyl-tRNA(Asn/Gln) amidotransferase subunit C from Gluconacetobacter diazotrophicus (strain ATCC 49037 / DSM 5601 / CCUG 37298 / CIP 103539 / LMG 7603 / PAl5).